We begin with the raw amino-acid sequence, 100 residues long: Urease subunit gamma (100 aa).

It belongs to the urease gamma subunit family. Heterotrimer of UreA (gamma), UreB (beta) and UreC (alpha) subunits. Three heterotrimers associate to form the active enzyme.

The protein localises to the cytoplasm. It catalyses the reaction urea + 2 H2O + H(+) = hydrogencarbonate + 2 NH4(+). It participates in nitrogen metabolism; urea degradation; CO(2) and NH(3) from urea (urease route): step 1/1. This is Urease subunit gamma from Mycobacteroides abscessus (strain ATCC 19977 / DSM 44196 / CCUG 20993 / CIP 104536 / JCM 13569 / NCTC 13031 / TMC 1543 / L948) (Mycobacterium abscessus).